Reading from the N-terminus, the 612-residue chain is Dihydroxy-acid dehydratase (612 aa).

A Mg(2+)-binding site is contributed by Asp-81. [2Fe-2S] cluster is bound at residue Cys-122. Residues Asp-123 and Lys-124 each coordinate Mg(2+). N6-carboxylysine is present on Lys-124. Cys-193 provides a ligand contact to [2Fe-2S] cluster. Glu-489 lines the Mg(2+) pocket. Ser-515 functions as the Proton acceptor in the catalytic mechanism.

The protein belongs to the IlvD/Edd family. As to quaternary structure, homodimer. [2Fe-2S] cluster serves as cofactor. Mg(2+) is required as a cofactor.

It catalyses the reaction (2R)-2,3-dihydroxy-3-methylbutanoate = 3-methyl-2-oxobutanoate + H2O. The enzyme catalyses (2R,3R)-2,3-dihydroxy-3-methylpentanoate = (S)-3-methyl-2-oxopentanoate + H2O. It participates in amino-acid biosynthesis; L-isoleucine biosynthesis; L-isoleucine from 2-oxobutanoate: step 3/4. It functions in the pathway amino-acid biosynthesis; L-valine biosynthesis; L-valine from pyruvate: step 3/4. Functionally, functions in the biosynthesis of branched-chain amino acids. Catalyzes the dehydration of (2R,3R)-2,3-dihydroxy-3-methylpentanoate (2,3-dihydroxy-3-methylvalerate) into 2-oxo-3-methylpentanoate (2-oxo-3-methylvalerate) and of (2R)-2,3-dihydroxy-3-methylbutanoate (2,3-dihydroxyisovalerate) into 2-oxo-3-methylbutanoate (2-oxoisovalerate), the penultimate precursor to L-isoleucine and L-valine, respectively. The sequence is that of Dihydroxy-acid dehydratase from Pseudomonas paraeruginosa (strain DSM 24068 / PA7) (Pseudomonas aeruginosa (strain PA7)).